The chain runs to 172 residues: uncharacterized protein (172 aa).

This is an uncharacterized protein from Saccharomyces cerevisiae (strain ATCC 204508 / S288c) (Baker's yeast).